Consider the following 631-residue polypeptide: Probable potassium transport system protein Kup 1 (631 aa).

12 helical membrane passes run 16 to 36 (LGLS…SPLY), 58 to 78 (VLSL…LVFV), 109 to 129 (VLVF…TLTP), 145 to 165 (PLFH…LFLI), 173 to 193 (VGAL…LLGI), 219 to 239 (GWSG…GEAL), 255 to 275 (WFCC…ALLL), 288 to 308 (LAPP…TIIA), 345 to 365 (IYIP…VAGF), 370 to 390 (GLAA…ALLV), 402 to 422 (PLAV…FFGA), and 427 to 447 (VGAG…VMIT).

It belongs to the HAK/KUP transporter (TC 2.A.72) family.

The protein localises to the cell inner membrane. It catalyses the reaction K(+)(in) + H(+)(in) = K(+)(out) + H(+)(out). In terms of biological role, transport of potassium into the cell. Likely operates as a K(+):H(+) symporter. The chain is Probable potassium transport system protein Kup 1 from Geobacter sulfurreducens (strain ATCC 51573 / DSM 12127 / PCA).